A 264-amino-acid polypeptide reads, in one-letter code: tRNA pseudouridine synthase A (264 aa).

D51 serves as the catalytic Nucleophile. Y109 provides a ligand contact to substrate.

It belongs to the tRNA pseudouridine synthase TruA family. As to quaternary structure, homodimer.

It carries out the reaction uridine(38/39/40) in tRNA = pseudouridine(38/39/40) in tRNA. In terms of biological role, formation of pseudouridine at positions 38, 39 and 40 in the anticodon stem and loop of transfer RNAs. The chain is tRNA pseudouridine synthase A from Vibrio cholerae serotype O1 (strain ATCC 39541 / Classical Ogawa 395 / O395).